We begin with the raw amino-acid sequence, 92 residues long: Protein S100-B (92 aa).

A Blocked amino end (Ser); alternate modification is found at Ser-2. Residue Ser-2 is modified to N-acetylserine; alternate. EF-hand domains are found at residues Asp-13 to Ile-48 and Lys-49 to Ala-84. Zn(2+) is bound at residue His-16. 3 residues coordinate Ca(2+): Ser-19, Glu-22, and Asp-24. A Zn(2+)-binding site is contributed by His-26. Ca(2+) contacts are provided by Lys-27, Glu-32, Asp-62, Asp-64, Asp-66, Glu-68, and Glu-73. Zn(2+) contacts are provided by His-86 and His-91.

It belongs to the S-100 family. In terms of assembly, dimer of either two alpha chains, or two beta chains, or one alpha and one beta chain. The S100B dimer binds two molecules of STK38. Interacts with CACYBP in a calcium-dependent manner. Interacts with ATAD3A; this interaction probably occurs in the cytosol prior to ATAD3A mitochondrial targeting. Interacts with S100A6. The S100B dimer interacts with two molecules of CAPZA1. Interacts with AGER. Interacts with PPP5C (via TPR repeats); the interaction is calcium-dependent and modulates PPP5C activity. Interacts with TPPP; this interaction inhibits TPPP dimerization. Interacts with isoform CLSTN3beta of CLSTN3; interaction promotes secretion. In terms of tissue distribution, although predominant among the water-soluble brain proteins, S100 is also found in a variety of other tissues.

It is found in the cytoplasm. The protein localises to the nucleus. The protein resides in the secreted. Small zinc- and- and calcium-binding protein that is highly expressed in astrocytes and constitutes one of the most abundant soluble proteins in brain. Weakly binds calcium but binds zinc very tightly-distinct binding sites with different affinities exist for both ions on each monomer. Physiological concentrations of potassium ion antagonize the binding of both divalent cations, especially affecting high-affinity calcium-binding sites. Acts as a neurotrophic factor that promotes astrocytosis and axonal proliferation. Involved in innervation of thermogenic adipose tissue by acting as an adipocyte-derived neurotrophic factor that promotes sympathetic innervation of adipose tissue. Binds to and initiates the activation of STK38 by releasing autoinhibitory intramolecular interactions within the kinase. Interaction with AGER after myocardial infarction may play a role in myocyte apoptosis by activating ERK1/2 and p53/TP53 signaling. Could assist ATAD3A cytoplasmic processing, preventing aggregation and favoring mitochondrial localization. May mediate calcium-dependent regulation on many physiological processes by interacting with other proteins, such as TPR-containing proteins, and modulating their activity. This is Protein S100-B from Homo sapiens (Human).